Reading from the N-terminus, the 123-residue chain is Thioredoxin H-type 1 (123 aa).

A2 carries the N-acetylalanine modification. The Thioredoxin domain maps to 2-119 (AATAEVIPAG…IEAKLLKHSQ (118 aa)). A disulfide bridge connects residues C45 and C48.

This sequence belongs to the thioredoxin family. Plant H-type subfamily.

The protein localises to the cytoplasm. Functionally, participates in various redox reactions through the reversible oxidation of the active center dithiol to a disulfide. The H form is known to activate a number of cytosolic enzymes. The protein is Thioredoxin H-type 1 (THL-1) of Brassica napus (Rape).